Consider the following 295-residue polypeptide: Indole-3-glycerol phosphate synthase (295 aa).

Belongs to the TrpC family.

It carries out the reaction 1-(2-carboxyphenylamino)-1-deoxy-D-ribulose 5-phosphate + H(+) = (1S,2R)-1-C-(indol-3-yl)glycerol 3-phosphate + CO2 + H2O. Its pathway is amino-acid biosynthesis; L-tryptophan biosynthesis; L-tryptophan from chorismate: step 4/5. The sequence is that of Indole-3-glycerol phosphate synthase from Prochlorococcus marinus (strain MIT 9215).